A 101-amino-acid polypeptide reads, in one-letter code: A-type ATP synthase subunit K (101 aa).

The next 3 helical transmembrane spans lie at 4-24 (ALLI…AAQA), 32-52 (FMGI…GAGV), and 75-95 (VLIF…FAVL).

The protein belongs to the V-ATPase proteolipid subunit family. As to quaternary structure, has multiple subunits with at least A(3), B(3), C, D, E, F, H, I and proteolipid K(x).

The protein resides in the cell membrane. In terms of biological role, component of the A-type ATP synthase that produces ATP from ADP in the presence of a proton gradient across the membrane. The chain is A-type ATP synthase subunit K from Sulfolobus acidocaldarius (strain ATCC 33909 / DSM 639 / JCM 8929 / NBRC 15157 / NCIMB 11770).